Reading from the N-terminus, the 68-residue chain is Large ribosomal subunit protein uL29 (68 aa).

The protein belongs to the universal ribosomal protein uL29 family.

This chain is Large ribosomal subunit protein uL29, found in Limosilactobacillus reuteri (strain DSM 20016) (Lactobacillus reuteri).